A 587-amino-acid chain; its full sequence is Leucine-rich repeat-containing protein 63 (587 aa).

LRR repeat units lie at residues Q251–R274, A344–L367, K368–L390, F392–L413, S414–L436, R437–L459, and L487–E510.

This is Leucine-rich repeat-containing protein 63 (LRRC63) from Homo sapiens (Human).